A 374-amino-acid chain; its full sequence is Carbamoyl phosphate synthase small chain (374 aa).

Residues 1–185 (MKAILALEDG…DVSSGYKWSD (185 aa)) form a CPSase region. Residues S45, G237, and G239 each coordinate L-glutamine. The Glutamine amidotransferase type-1 domain maps to 189–374 (RLVLVDYGVK…RNLVKDATGK (186 aa)). The Nucleophile role is filled by C264. L-glutamine is bound by residues L265, Q268, N306, G308, and F309. Catalysis depends on residues H347 and E349.

Belongs to the CarA family. In terms of assembly, composed of two chains; the small (or glutamine) chain promotes the hydrolysis of glutamine to ammonia, which is used by the large (or ammonia) chain to synthesize carbamoyl phosphate. Tetramer of heterodimers (alpha,beta)4.

The enzyme catalyses hydrogencarbonate + L-glutamine + 2 ATP + H2O = carbamoyl phosphate + L-glutamate + 2 ADP + phosphate + 2 H(+). It carries out the reaction L-glutamine + H2O = L-glutamate + NH4(+). It functions in the pathway amino-acid biosynthesis; L-arginine biosynthesis; carbamoyl phosphate from bicarbonate: step 1/1. Its pathway is pyrimidine metabolism; UMP biosynthesis via de novo pathway; (S)-dihydroorotate from bicarbonate: step 1/3. In terms of biological role, small subunit of the glutamine-dependent carbamoyl phosphate synthetase (CPSase). CPSase catalyzes the formation of carbamoyl phosphate from the ammonia moiety of glutamine, carbonate, and phosphate donated by ATP, constituting the first step of 2 biosynthetic pathways, one leading to arginine and/or urea and the other to pyrimidine nucleotides. The small subunit (glutamine amidotransferase) binds and cleaves glutamine to supply the large subunit with the substrate ammonia. The polypeptide is Carbamoyl phosphate synthase small chain (Maridesulfovibrio salexigens (strain ATCC 14822 / DSM 2638 / NCIMB 8403 / VKM B-1763) (Desulfovibrio salexigens)).